A 446-amino-acid polypeptide reads, in one-letter code: MSSPTSSLDTPLPGNGSPQPSTSSTSPTIKEEGQETDPPPGSEGSSSAYIVVILEPEDEPERKRKKGPAPKMLGHELCRVCGDKASGFHYNVLSCEGCKGFFRRSVVHGGAGRYACRGSGTCQMDAFMRRKCQLCRLRKCKEAGMREQCVLSEEQIRKKKIQKQQQQQPPPPTEPASGSSARPAASPGTSEASSQGSGEGEGIQLTAAQELMIQQLVAAQLQCNKRSFSDQPKVTPWPLGADPQSRDARQQRFAHFTELAIISVQEIVDFAKQVPGFLQLGREDQIALLKASTIEIMLLETARRYNHETECITFLKDFTYSKDDFHRAGLQVEFINPIFEFSRAMRRLGLDDAEYALLIAINIFSADRPNVQEPSRVEALQQPYVEALLSYTRIKRPQDQLRFPRMLMKLVSLRTLSSVHSEQVFALRLQDKKLPPLLSEIWDVHE.

The segment covering 1–28 has biased composition (low complexity); that stretch reads MSSPTSSLDTPLPGNGSPQPSTSSTSPT. The disordered stretch occupies residues 1 to 69; it reads MSSPTSSLDT…PERKRKKGPA (69 aa). The segment at 1–76 is transactivation AF-1; required for ligand-independent transactivation function; it reads MSSPTSSLDT…GPAPKMLGHE (76 aa). A DNA-binding region (nuclear receptor) is located at residues 75–152; sequence HELCRVCGDK…AGMREQCVLS (78 aa). 2 consecutive NR C4-type zinc fingers follow at residues 78–98 and 116–140; these read CRVCGDKASGFHYNVLSCEGC and CRGSGTCQMDAFMRRKCQLCRLRKC. Positions 160 to 201 are disordered; it reads KIQKQQQQQPPPPTEPASGSSARPAASPGTSEASSQGSGEGE. Positions 175-196 are enriched in low complexity; that stretch reads PASGSSARPAASPGTSEASSQG. Residues 205–446 form a transactivation AF-2; required for ligand-dependent transactivation function; mediates interaction with CCAR2 region; sequence LTAAQELMIQ…LLSEIWDVHE (242 aa). One can recognise an NR LBD domain in the interval 208–446; the sequence is AQELMIQQLV…LLSEIWDVHE (239 aa). Glycyl lysine isopeptide (Lys-Gly) (interchain with G-Cter in SUMO2) cross-links involve residues Lys-395 and Lys-433.

It belongs to the nuclear hormone receptor family. NR1 subfamily. In terms of assembly, forms a heterodimer with RXR. Interacts with CCAR2 (via N-terminus) in a ligand-independent manner. Interacts (when sumoylated) with GPS2; interaction with GPS2 onto hepatic acute phase protein promoters prevents N-Cor corepressor complex dissociation. Interacts with ABCA12 and ABCA1; this interaction is required for ABCA1 localization to the cell surface and is necessary for its normal activity and stability. In terms of processing, sumoylated by SUMO2 at Lys-395 and Lys-433 during the hepatic acute phase response, leading to promote interaction with GPS2 and prevent N-Cor corepressor complex dissociation.

The protein localises to the nucleus. Functionally, nuclear receptor that exhibits a ligand-dependent transcriptional activation activity. Binds preferentially to double-stranded oligonucleotide direct repeats having the consensus half-site sequence 5'-AGGTCA-3' and 4-nt spacing (DR-4). Regulates cholesterol uptake through MYLIP-dependent ubiquitination of LDLR, VLDLR and LRP8; DLDLR and LRP8. Interplays functionally with RORA for the regulation of genes involved in liver metabolism. Induces LPCAT3-dependent phospholipid remodeling in endoplasmic reticulum (ER) membranes of hepatocytes, driving SREBF1 processing and lipogenesis. Via LPCAT3, triggers the incorporation of arachidonate into phosphatidylcholines of ER membranes, increasing membrane dynamics and enabling triacylglycerols transfer to nascent very low-density lipoprotein (VLDL) particles. Via LPCAT3 also counteracts lipid-induced ER stress response and inflammation, likely by modulating SRC kinase membrane compartmentalization and limiting the synthesis of lipid inflammatory mediators. Plays an anti-inflammatory role during the hepatic acute phase response by acting as a corepressor: inhibits the hepatic acute phase response by preventing dissociation of the N-Cor corepressor complex. The polypeptide is Oxysterols receptor LXR-beta (Nr1h2) (Rattus norvegicus (Rat)).